Here is a 568-residue protein sequence, read N- to C-terminus: Sphingosine-1-phosphate lyase 1 (568 aa).

Residues 1-41 (MPSTDLLKLKDFEPYLEILEAYSTKAKNYVNGYCTKYEPWQ) are Lumenal-facing. Residues 42–62 (LIAGSVLCTLLVVWVYELIFQ) form a helical; Signal-anchor for type III membrane protein membrane-spanning segment. Residues 63–568 (PESLWSRFKN…NQMNGSPKPR (506 aa)) lie on the Cytoplasmic side of the membrane. Residue Lys353 is modified to N6-(pyridoxal phosphate)lysine; alternate. Lys353 bears the N6-acetyllysine; alternate mark. 3'-nitrotyrosine occurs at positions 356 and 366. Ser564 bears the Phosphoserine mark.

This sequence belongs to the group II decarboxylase family. Sphingosine-1-phosphate lyase subfamily. As to quaternary structure, homodimer. Pyridoxal 5'-phosphate is required as a cofactor.

Its subcellular location is the endoplasmic reticulum membrane. The catalysed reaction is sphinganine 1-phosphate = hexadecanal + phosphoethanolamine. It catalyses the reaction sphing-4-enine 1-phosphate = (2E)-hexadecenal + phosphoethanolamine. It participates in lipid metabolism; sphingolipid metabolism. Cleaves phosphorylated sphingoid bases (PSBs), such as sphingosine-1-phosphate, into fatty aldehydes and phosphoethanolamine. Elevates stress-induced ceramide production and apoptosis. Required for global lipid homeostasis in liver and cholesterol homeostasis in fibroblasts. Involved in the regulation of pro-inflammatory response and neutrophil trafficking. Modulates neuronal autophagy via phosphoethanolamine production which regulates accumulation of aggregate-prone proteins such as APP. Seems to play a role in establishing neuronal contact sites and axonal maintenance. This chain is Sphingosine-1-phosphate lyase 1, found in Rattus norvegicus (Rat).